We begin with the raw amino-acid sequence, 125 residues long: Fluoride-specific ion channel FluC (125 aa).

Transmembrane regions (helical) follow at residues 4–24 (PLLAVMIGGCAGCVIRWLLAV), 36–56 (GTLLVNLVGGLIIGATVAWFA), 68–88 (LITTGLCGGMTTFSTFSLEVV), and 100–120 (VISVLTHVTGSLLMTIAGFWL). Residues Gly75 and Thr78 each coordinate Na(+).

This sequence belongs to the fluoride channel Fluc/FEX (TC 1.A.43) family.

It localises to the cell inner membrane. It carries out the reaction fluoride(in) = fluoride(out). Na(+) is not transported, but it plays an essential structural role and its presence is essential for fluoride channel function. In terms of biological role, fluoride-specific ion channel. Important for reducing fluoride concentration in the cell, thus reducing its toxicity. The protein is Fluoride-specific ion channel FluC of Erwinia tasmaniensis (strain DSM 17950 / CFBP 7177 / CIP 109463 / NCPPB 4357 / Et1/99).